We begin with the raw amino-acid sequence, 412 residues long: Argininosuccinate synthase (412 aa).

A10–S18 is an ATP binding site. L-citrulline is bound at residue Y89. An ATP-binding site is contributed by G119. The L-aspartate site is built by T121, N125, and D126. L-citrulline is bound at residue N125. Positions 129, 177, 261, and 273 each coordinate L-citrulline.

It belongs to the argininosuccinate synthase family. Type 1 subfamily. As to quaternary structure, homotetramer.

It is found in the cytoplasm. It catalyses the reaction L-citrulline + L-aspartate + ATP = 2-(N(omega)-L-arginino)succinate + AMP + diphosphate + H(+). Its pathway is amino-acid biosynthesis; L-arginine biosynthesis; L-arginine from L-ornithine and carbamoyl phosphate: step 2/3. The polypeptide is Argininosuccinate synthase (Bifidobacterium longum subsp. infantis (strain ATCC 15697 / DSM 20088 / JCM 1222 / NCTC 11817 / S12)).